Reading from the N-terminus, the 37-residue chain is MKVRASVKKICVKCKIVKRKGIVRVICETPKHSQRQG.

Belongs to the bacterial ribosomal protein bL36 family.

This chain is Large ribosomal subunit protein bL36, found in Geobacter sp. (strain M21).